The chain runs to 140 residues: Small ribosomal subunit protein uS11c (140 aa).

It belongs to the universal ribosomal protein uS11 family. In terms of assembly, part of the 30S ribosomal subunit.

It localises to the plastid. Its subcellular location is the chloroplast. The chain is Small ribosomal subunit protein uS11c from Pelargonium hortorum (Common geranium).